Reading from the N-terminus, the 229-residue chain is Ribosomal RNA small subunit methyltransferase G (229 aa).

Residues Gly71, 122-123, and Arg139 contribute to the S-adenosyl-L-methionine site; that span reads AE.

This sequence belongs to the methyltransferase superfamily. RNA methyltransferase RsmG family.

It localises to the cytoplasm. Specifically methylates the N7 position of a guanine in 16S rRNA. This Thermotoga neapolitana (strain ATCC 49049 / DSM 4359 / NBRC 107923 / NS-E) protein is Ribosomal RNA small subunit methyltransferase G.